A 169-amino-acid chain; its full sequence is Lipoprotein signal peptidase (169 aa).

Topologically, residues 1–9 are cytoplasmic; sequence MPDVDRFGR. A helical membrane pass occupies residues 10–30; sequence LPWLWITVLVFVLDQVSKAFF. Residues 31 to 67 lie on the Periplasmic side of the membrane; the sequence is QAELSMYQQIVVIPDLFSWTLAYNTGAAFSFLADSSG. A helical membrane pass occupies residues 68 to 89; that stretch reads WQRWLFALIAIVVSASLVVWLK. Residues 90 to 96 are Cytoplasmic-facing; sequence RLKKGET. A helical transmembrane segment spans residues 97–118; that stretch reads WLAIALALVLGGALGNLYDRMV. The Periplasmic portion of the chain corresponds to 119–140; that stretch reads LGHVVDFILVHWQNRWYFPAFN. Active-site residues include Asp-124 and Asp-143. Residues 141–154 form a helical membrane-spanning segment; it reads LADSAITVGAVMLA. The Cytoplasmic portion of the chain corresponds to 155–169; it reads LDMFRSKKSGEAAHG.

It belongs to the peptidase A8 family. In terms of assembly, monomer in the crystal.

The protein localises to the cell inner membrane. It catalyses the reaction Release of signal peptides from bacterial membrane prolipoproteins. Hydrolyzes -Xaa-Yaa-Zaa-|-(S,diacylglyceryl)Cys-, in which Xaa is hydrophobic (preferably Leu), and Yaa (Ala or Ser) and Zaa (Gly or Ala) have small, neutral side chains.. It functions in the pathway protein modification; lipoprotein biosynthesis (signal peptide cleavage). Inhibited by globomycin. In terms of biological role, this protein specifically catalyzes the removal of signal peptides from prolipoproteins. This chain is Lipoprotein signal peptidase, found in Pseudomonas aeruginosa (strain ATCC 15692 / DSM 22644 / CIP 104116 / JCM 14847 / LMG 12228 / 1C / PRS 101 / PAO1).